The following is a 286-amino-acid chain: Acetyl-coenzyme A carboxylase carboxyl transferase subunit beta (286 aa).

The 261-residue stretch at 26 to 286 folds into the CoA carboxyltransferase N-terminal domain; the sequence is LWEKCVKCDA…LAKFTRRAAV (261 aa). 4 residues coordinate Zn(2+): C30, C33, C49, and C52. Residues 30-52 form a C4-type zinc finger; it reads CVKCDAVLYKPELEKNLDVCPKC.

Belongs to the AccD/PCCB family. As to quaternary structure, acetyl-CoA carboxylase is a heterohexamer composed of biotin carboxyl carrier protein (AccB), biotin carboxylase (AccC) and two subunits each of ACCase subunit alpha (AccA) and ACCase subunit beta (AccD). Zn(2+) is required as a cofactor.

The protein resides in the cytoplasm. The catalysed reaction is N(6)-carboxybiotinyl-L-lysyl-[protein] + acetyl-CoA = N(6)-biotinyl-L-lysyl-[protein] + malonyl-CoA. It participates in lipid metabolism; malonyl-CoA biosynthesis; malonyl-CoA from acetyl-CoA: step 1/1. Component of the acetyl coenzyme A carboxylase (ACC) complex. Biotin carboxylase (BC) catalyzes the carboxylation of biotin on its carrier protein (BCCP) and then the CO(2) group is transferred by the transcarboxylase to acetyl-CoA to form malonyl-CoA. The protein is Acetyl-coenzyme A carboxylase carboxyl transferase subunit beta of Cellvibrio japonicus (strain Ueda107) (Pseudomonas fluorescens subsp. cellulosa).